The following is a 319-amino-acid chain: MRRSRILGIGSYLPKSLVTNDELACTVETSDEWIVKRTGIRQRYIAADDQMTSDMAVEAAKLALNDSGINKQDVDLIVVATTTPDRTFPSCATIVQSKLECKNAFAFDIQAVCSGFIYAMAIADNFIKSGQVNVSLVIGAEVMSRILDWKDRSTCVLFGDGAGAVVLSNNSARNTGVISTILYSDGTLHNLLYTSGGTAYNGVAGTICMNGTVVFEHAIEKLSASIVEILNKNNLSIDEVNWFVLHQANIRIIELVARRLKIPSEKMVISINQHANTSAASIPLALSYAKNSGKLKQDDLVILAAIGAGITWGVCLVRM.

Catalysis depends on residues Cys-113 and His-246. An ACP-binding region spans residues 247 to 251 (QANIR). Residue Asn-276 is part of the active site.

It belongs to the thiolase-like superfamily. FabH family. In terms of assembly, homodimer.

It localises to the cytoplasm. It carries out the reaction malonyl-[ACP] + acetyl-CoA + H(+) = 3-oxobutanoyl-[ACP] + CO2 + CoA. Its pathway is lipid metabolism; fatty acid biosynthesis. Functionally, catalyzes the condensation reaction of fatty acid synthesis by the addition to an acyl acceptor of two carbons from malonyl-ACP. Catalyzes the first condensation reaction which initiates fatty acid synthesis and may therefore play a role in governing the total rate of fatty acid production. Possesses both acetoacetyl-ACP synthase and acetyl transacylase activities. Its substrate specificity determines the biosynthesis of branched-chain and/or straight-chain of fatty acids. The protein is Beta-ketoacyl-[acyl-carrier-protein] synthase III of Ehrlichia ruminantium (strain Gardel).